The sequence spans 509 residues: uncharacterized protein (509 aa).

Belongs to the MG032/MG096/MG288 family.

This is an uncharacterized protein from Mycoplasma pneumoniae (strain ATCC 29342 / M129 / Subtype 1) (Mycoplasmoides pneumoniae).